Reading from the N-terminus, the 313-residue chain is Ribosomal RNA small subunit methyltransferase H (313 aa).

S-adenosyl-L-methionine-binding positions include 35-37 (GGH), Asp-55, Phe-81, Asp-103, and Gln-110.

This sequence belongs to the methyltransferase superfamily. RsmH family.

The protein resides in the cytoplasm. The enzyme catalyses cytidine(1402) in 16S rRNA + S-adenosyl-L-methionine = N(4)-methylcytidine(1402) in 16S rRNA + S-adenosyl-L-homocysteine + H(+). Its function is as follows. Specifically methylates the N4 position of cytidine in position 1402 (C1402) of 16S rRNA. The polypeptide is Ribosomal RNA small subunit methyltransferase H (Azotobacter vinelandii (strain DJ / ATCC BAA-1303)).